Consider the following 596-residue polypeptide: Pumilio homolog 12 (596 aa).

The PUM-HD domain occupies 254–596 (LNEDLTMSLN…KVLSALSSKK (343 aa)). Pumilio repeat units follow at residues 277–312 (EARG…MIFN), 313–348 (EIID…QIVH), 349–388 (SITR…IIIS), 389–424 (ALKH…FLFE), 425–460 (AAIT…HLVS), 461–496 (EIAS…EILE), 497–532 (QLEG…RIIR), and 533–570 (ELIN…LLVD).

The protein resides in the cytoplasm. It is found in the nucleus. Sequence-specific RNA-binding protein that regulates translation and mRNA stability by binding the 3'-UTR of target mRNAs. The protein is Pumilio homolog 12 (APUM12) of Arabidopsis thaliana (Mouse-ear cress).